The sequence spans 474 residues: ATP synthase subunit beta (474 aa).

ATP is bound at residue 155 to 162 (GGAGVGKT).

The protein belongs to the ATPase alpha/beta chains family. In terms of assembly, F-type ATPases have 2 components, CF(1) - the catalytic core - and CF(0) - the membrane proton channel. CF(1) has five subunits: alpha(3), beta(3), gamma(1), delta(1), epsilon(1). CF(0) has three main subunits: a(1), b(2) and c(9-12). The alpha and beta chains form an alternating ring which encloses part of the gamma chain. CF(1) is attached to CF(0) by a central stalk formed by the gamma and epsilon chains, while a peripheral stalk is formed by the delta and b chains.

The protein resides in the cell inner membrane. It catalyses the reaction ATP + H2O + 4 H(+)(in) = ADP + phosphate + 5 H(+)(out). In terms of biological role, produces ATP from ADP in the presence of a proton gradient across the membrane. The catalytic sites are hosted primarily by the beta subunits. The sequence is that of ATP synthase subunit beta from Sorangium cellulosum (strain So ce56) (Polyangium cellulosum (strain So ce56)).